Reading from the N-terminus, the 38-residue chain is Photosystem II reaction center protein L (38 aa).

Residues 17 to 37 (SLYWGLLLIFVLAILFSNYFF) form a helical membrane-spanning segment.

Belongs to the PsbL family. In terms of assembly, PSII is composed of 1 copy each of membrane proteins PsbA, PsbB, PsbC, PsbD, PsbE, PsbF, PsbH, PsbI, PsbJ, PsbK, PsbL, PsbM, PsbT, PsbX, PsbY, PsbZ, Psb30/Ycf12, at least 3 peripheral proteins of the oxygen-evolving complex and a large number of cofactors. It forms dimeric complexes.

Its subcellular location is the plastid. It is found in the chloroplast thylakoid membrane. In terms of biological role, one of the components of the core complex of photosystem II (PSII). PSII is a light-driven water:plastoquinone oxidoreductase that uses light energy to abstract electrons from H(2)O, generating O(2) and a proton gradient subsequently used for ATP formation. It consists of a core antenna complex that captures photons, and an electron transfer chain that converts photonic excitation into a charge separation. This subunit is found at the monomer-monomer interface and is required for correct PSII assembly and/or dimerization. The polypeptide is Photosystem II reaction center protein L (Aethionema cordifolium (Lebanon stonecress)).